The sequence spans 161 residues: Globin CTT-VIIB-3 (161 aa).

The N-terminal stretch at 1 to 16 is a signal peptide; it reads MKFFAVLALCIVGAIA. Residues 18–161 enclose the Globin domain; it reads PLTADEASLV…NTYAIVVPRL (144 aa). Residues His76 and His111 each coordinate heme b.

This sequence belongs to the globin family. Homodimer.

The sequence is that of Globin CTT-VIIB-3 (CTT-7B3) from Chironomus thummi thummi (Midge).